Reading from the N-terminus, the 143-residue chain is Large ribosomal subunit protein uL11 (143 aa).

This sequence belongs to the universal ribosomal protein uL11 family. In terms of assembly, part of the ribosomal stalk of the 50S ribosomal subunit. Interacts with L10 and the large rRNA to form the base of the stalk. L10 forms an elongated spine to which L12 dimers bind in a sequential fashion forming a multimeric L10(L12)X complex. In terms of processing, one or more lysine residues are methylated.

Its function is as follows. Forms part of the ribosomal stalk which helps the ribosome interact with GTP-bound translation factors. This is Large ribosomal subunit protein uL11 from Polynucleobacter asymbioticus (strain DSM 18221 / CIP 109841 / QLW-P1DMWA-1) (Polynucleobacter necessarius subsp. asymbioticus).